A 403-amino-acid chain; its full sequence is S-adenosylmethionine synthase (403 aa).

141 to 146 (GQGSVD) lines the ATP pocket.

This sequence belongs to the AdoMet synthase 2 family. Mg(2+) is required as a cofactor.

It catalyses the reaction L-methionine + ATP + H2O = S-adenosyl-L-methionine + phosphate + diphosphate. Its pathway is amino-acid biosynthesis; S-adenosyl-L-methionine biosynthesis; S-adenosyl-L-methionine from L-methionine: step 1/1. Functionally, catalyzes the formation of S-adenosylmethionine from methionine and ATP. The sequence is that of S-adenosylmethionine synthase from Methanococcus aeolicus (strain ATCC BAA-1280 / DSM 17508 / OCM 812 / Nankai-3).